We begin with the raw amino-acid sequence, 453 residues long: Secreted aspartic protease 10 (453 aa).

The signal sequence occupies residues 1–20; it reads MDLVIMNFVFLLYLTSVVKC. The Peptidase A1 domain maps to 52–372; it reads YTTELEIGSN…DLQDMTISVA (321 aa). Residue Asp-70 is part of the active site. 70 to 72 contributes to the pepstatin A binding site; sequence DTG. Residues Cys-85 and Cys-112 are joined by a disulfide bond. N-linked (GlcNAc...) asparagine glycans are attached at residues Asn-115 and Asn-128. Pepstatin A is bound at residue 138–139; the sequence is VD. N-linked (GlcNAc...) asparagine glycosylation is found at Asn-168, Asn-208, Asn-211, and Asn-245. Asp-266 is a catalytic residue. Position 266–270 (266–270) interacts with pepstatin A; sequence DTGST. An N-linked (GlcNAc...) asparagine glycan is attached at Asn-287. Cys-301 and Cys-333 are oxidised to a cystine. The segment at 387 to 432 is disordered; sequence NPNEDQNEVPTSTSFTQSASSSGSQPSSTISGENMDKNTTSSSSGN. Positions 397–417 are enriched in low complexity; the sequence is TSTSFTQSASSSGSQPSSTIS. The span at 423 to 432 shows a compositional bias: polar residues; that stretch reads KNTTSSSSGN. Asn-424 carries N-linked (GlcNAc...) asparagine glycosylation. Ser-429 is lipidated: GPI-anchor amidated serine. Residues 430–453 constitute a propeptide, removed in mature form; it reads SGNCQTRSWIAILSALFLVYIHII.

Belongs to the peptidase A1 family. Post-translationally, the GPI-anchor is attached to the protein in the endoplasmic reticulum and serves to target the protein to the cell surface. There, the glucosamine-inositol phospholipid moiety is cleaved off and the GPI-modified mannoprotein is covalently attached via its lipidless GPI glycan remnant to the 1,6-beta-glucan of the outer cell wall layer.

The protein resides in the secreted. It localises to the cell membrane. The enzyme catalyses Preferential cleavage at the carboxyl of hydrophobic amino acids, but fails to cleave 15-Leu-|-Tyr-16, 16-Tyr-|-Leu-17 and 24-Phe-|-Phe-25 of insulin B chain. Activates trypsinogen, and degrades keratin.. Secreted aspartic peptidases (SAPs) are a group of ten acidic hydrolases considered as key virulence factors. These enzymes supply the fungus with nutrient amino acids as well as are able to degrade the selected host's proteins involved in the immune defense. Required for cell surface integrity and cell separation during budding. This is Secreted aspartic protease 10 from Candida albicans (strain SC5314 / ATCC MYA-2876) (Yeast).